Here is a 519-residue protein sequence, read N- to C-terminus: Exodeoxyribonuclease 7 large subunit (519 aa).

It belongs to the XseA family. As to quaternary structure, heterooligomer composed of large and small subunits.

The protein resides in the cytoplasm. The catalysed reaction is Exonucleolytic cleavage in either 5'- to 3'- or 3'- to 5'-direction to yield nucleoside 5'-phosphates.. Its function is as follows. Bidirectionally degrades single-stranded DNA into large acid-insoluble oligonucleotides, which are then degraded further into small acid-soluble oligonucleotides. In Cereibacter sphaeroides (strain ATCC 17025 / ATH 2.4.3) (Rhodobacter sphaeroides), this protein is Exodeoxyribonuclease 7 large subunit.